The following is a 100-amino-acid chain: Large ribosomal subunit protein bL21 (100 aa).

This sequence belongs to the bacterial ribosomal protein bL21 family. In terms of assembly, part of the 50S ribosomal subunit. Contacts protein L20.

In terms of biological role, this protein binds to 23S rRNA in the presence of protein L20. This is Large ribosomal subunit protein bL21 from Corynebacterium kroppenstedtii (strain DSM 44385 / JCM 11950 / CIP 105744 / CCUG 35717).